A 408-amino-acid polypeptide reads, in one-letter code: Dual-specificity RNA methyltransferase RlmN (408 aa).

Glutamate 120 serves as the catalytic Proton acceptor. Positions 126-375 (EEGRGTLCIS…IRTPRGRDIL (250 aa)) constitute a Radical SAM core domain. Cysteine 133 and cysteine 378 are disulfide-bonded. Residues cysteine 140, cysteine 144, and cysteine 147 each contribute to the [4Fe-4S] cluster site. Residues 204-205 (GE), serine 236, 258-260 (SLH), and asparagine 335 contribute to the S-adenosyl-L-methionine site. The active-site S-methylcysteine intermediate is the cysteine 378.

The protein belongs to the radical SAM superfamily. RlmN family. The cofactor is [4Fe-4S] cluster.

The protein localises to the cytoplasm. The catalysed reaction is adenosine(2503) in 23S rRNA + 2 reduced [2Fe-2S]-[ferredoxin] + 2 S-adenosyl-L-methionine = 2-methyladenosine(2503) in 23S rRNA + 5'-deoxyadenosine + L-methionine + 2 oxidized [2Fe-2S]-[ferredoxin] + S-adenosyl-L-homocysteine. It catalyses the reaction adenosine(37) in tRNA + 2 reduced [2Fe-2S]-[ferredoxin] + 2 S-adenosyl-L-methionine = 2-methyladenosine(37) in tRNA + 5'-deoxyadenosine + L-methionine + 2 oxidized [2Fe-2S]-[ferredoxin] + S-adenosyl-L-homocysteine. Specifically methylates position 2 of adenine 2503 in 23S rRNA and position 2 of adenine 37 in tRNAs. m2A2503 modification seems to play a crucial role in the proofreading step occurring at the peptidyl transferase center and thus would serve to optimize ribosomal fidelity. In Rhizobium johnstonii (strain DSM 114642 / LMG 32736 / 3841) (Rhizobium leguminosarum bv. viciae), this protein is Dual-specificity RNA methyltransferase RlmN.